We begin with the raw amino-acid sequence, 84 residues long: RNA-binding protein Hfq (84 aa).

Positions 10 to 70 (DLFLNVLRRD…ISTIMPFRPV (61 aa)) constitute a Sm domain.

The protein belongs to the Hfq family. In terms of assembly, homohexamer.

Its function is as follows. RNA chaperone that binds small regulatory RNA (sRNAs) and mRNAs to facilitate mRNA translational regulation in response to envelope stress, environmental stress and changes in metabolite concentrations. Also binds with high specificity to tRNAs. This chain is RNA-binding protein Hfq, found in Moorella thermoacetica (strain ATCC 39073 / JCM 9320).